We begin with the raw amino-acid sequence, 143 residues long: Large ribosomal subunit protein uL11 (143 aa).

It belongs to the universal ribosomal protein uL11 family. As to quaternary structure, part of the ribosomal stalk of the 50S ribosomal subunit. Interacts with L10 and the large rRNA to form the base of the stalk. L10 forms an elongated spine to which L12 dimers bind in a sequential fashion forming a multimeric L10(L12)X complex. In terms of processing, one or more lysine residues are methylated.

Its function is as follows. Forms part of the ribosomal stalk which helps the ribosome interact with GTP-bound translation factors. The sequence is that of Large ribosomal subunit protein uL11 from Halorhodospira halophila (strain DSM 244 / SL1) (Ectothiorhodospira halophila (strain DSM 244 / SL1)).